Consider the following 348-residue polypeptide: GTPase Obg (348 aa).

Positions 1 to 159 (MKFLDQARIY…MTLWLRLKLI (159 aa)) constitute an Obg domain. The 168-residue stretch at 160 to 327 (ADAGLVGLPN…TLQSLLAAID (168 aa)) folds into the OBG-type G domain. Residues 166–173 (GLPNAGKS), 191–195 (FTTLH), 212–215 (DIPG), 279–282 (SKID), and 308–310 (SAA) contribute to the GTP site. Ser-173 and Thr-193 together coordinate Mg(2+).

It belongs to the TRAFAC class OBG-HflX-like GTPase superfamily. OBG GTPase family. Monomer. The cofactor is Mg(2+).

It is found in the cytoplasm. Its function is as follows. An essential GTPase which binds GTP, GDP and possibly (p)ppGpp with moderate affinity, with high nucleotide exchange rates and a fairly low GTP hydrolysis rate. Plays a role in control of the cell cycle, stress response, ribosome biogenesis and in those bacteria that undergo differentiation, in morphogenesis control. This chain is GTPase Obg, found in Beijerinckia indica subsp. indica (strain ATCC 9039 / DSM 1715 / NCIMB 8712).